Reading from the N-terminus, the 189-residue chain is Probable nicotinate-nucleotide adenylyltransferase (189 aa).

This sequence belongs to the NadD family.

The enzyme catalyses nicotinate beta-D-ribonucleotide + ATP + H(+) = deamido-NAD(+) + diphosphate. It participates in cofactor biosynthesis; NAD(+) biosynthesis; deamido-NAD(+) from nicotinate D-ribonucleotide: step 1/1. Functionally, catalyzes the reversible adenylation of nicotinate mononucleotide (NaMN) to nicotinic acid adenine dinucleotide (NaAD). The protein is Probable nicotinate-nucleotide adenylyltransferase of Bacillus cereus (strain AH187).